The primary structure comprises 64 residues: DNA-directed RNA polymerase subunit omega (64 aa).

This sequence belongs to the RNA polymerase subunit omega family. In terms of assembly, the RNAP catalytic core consists of 2 alpha, 1 beta, 1 beta' and 1 omega subunit. When a sigma factor is associated with the core the holoenzyme is formed, which can initiate transcription.

The catalysed reaction is RNA(n) + a ribonucleoside 5'-triphosphate = RNA(n+1) + diphosphate. Functionally, promotes RNA polymerase assembly. Latches the N- and C-terminal regions of the beta' subunit thereby facilitating its interaction with the beta and alpha subunits. This chain is DNA-directed RNA polymerase subunit omega, found in Oceanobacillus iheyensis (strain DSM 14371 / CIP 107618 / JCM 11309 / KCTC 3954 / HTE831).